A 119-amino-acid polypeptide reads, in one-letter code: Large ribosomal subunit protein bL20 (119 aa).

This sequence belongs to the bacterial ribosomal protein bL20 family.

In terms of biological role, binds directly to 23S ribosomal RNA and is necessary for the in vitro assembly process of the 50S ribosomal subunit. It is not involved in the protein synthesizing functions of that subunit. The sequence is that of Large ribosomal subunit protein bL20 from Xanthomonas oryzae pv. oryzae (strain PXO99A).